The primary structure comprises 456 residues: Chaperone protein dnaJ GFA2, mitochondrial (456 aa).

The N-terminal 89 residues, 1 to 89, are a transit peptide targeting the mitochondrion; it reads MVPSNGAKVL…RSFHGTGSSF (89 aa). The 66-residue stretch at 94–159 folds into the J domain; the sequence is DYYSVLGVSK…EKRDLYDQVG (66 aa). Residues 225–303 form a CR-type zinc finger; it reads GCSKTVTFQT…CRGARVVRGQ (79 aa). Zn(2+) contacts are provided by C238, C241, C255, C258, C277, C280, C291, and C294. CXXCXGXG motif repeat units lie at residues 238–245, 255–262, 277–284, and 291–298; these read CNTCGGQG, CKACNGSG, CQKCGGAG, and CKSCRGAR.

The protein belongs to the DnaJ family. In terms of tissue distribution, widely expressed.

Its subcellular location is the mitochondrion. Its function is as follows. Chaperone that may play a role in mitochondrial protein folding. Involved in female gametophyte development. Required for cell death of the synergid cells during fertilization process, and fusion of the polar nuclei during megagametogenesis. The chain is Chaperone protein dnaJ GFA2, mitochondrial from Arabidopsis thaliana (Mouse-ear cress).